The sequence spans 243 residues: Endochitinase (243 aa).

Intrachain disulfides connect C23–C85, C97–C105, and C223–C236. E67 acts as the Proton donor in catalysis.

It is found in the vacuole. The catalysed reaction is Random endo-hydrolysis of N-acetyl-beta-D-glucosaminide (1-&gt;4)-beta-linkages in chitin and chitodextrins.. Its function is as follows. Defense against chitin-containing fungal pathogens. Shows activity on chitin, tetra-N-acetylglucosamine and chitosan. This is Endochitinase from Carica papaya (Papaya).